The following is a 396-amino-acid chain: Putative T-box protein 39 (396 aa).

Residues 11-192 (MAEEDRWKQW…KNSTYGNRLD (182 aa)) constitute a DNA-binding region (T-box). A disordered region spans residues 185 to 215 (STYGNRLDGGNKRKNTDSSEERTSKRSKNET). Residues 193 to 215 (GGNKRKNTDSSEERTSKRSKNET) show a composition bias toward basic and acidic residues.

It is found in the nucleus. This chain is Putative T-box protein 39 (tbx-39), found in Caenorhabditis elegans.